The sequence spans 287 residues: Serine/arginine-rich SC35-like splicing factor SCL33 (287 aa).

The disordered stretch occupies residues 1–34 (MRGRSYTPSPPRGYGRRGRSPSPRGRYGGRSRDL). Phosphoserine occurs at positions 9 and 20. One can recognise an RRM domain in the interval 36 to 114 (TSLLVRNLRH…RELTVVFAEE (79 aa)). Residues 116–132 (RKKPTEMRARERGGGRF) show a composition bias toward basic and acidic residues. Residues 116–287 (RKKPTEMRAR…QYDEDRSPSQ (172 aa)) are disordered. A phosphoserine mark is found at Ser165, Ser175, Ser177, Ser188, and Ser190. A compositionally biased stretch (basic and acidic residues) spans 177 to 187 (SPREERYDGRR). Residues 220–237 (SISRSPRRSRSPSPKRNR) show a composition bias toward basic residues. Residues Ser238, Ser248, Ser271, Ser284, and Ser286 each carry the phosphoserine modification. Residues 244–260 (SISRSPRRSRSPRRSRR) are compositionally biased toward basic residues. Basic and acidic residues predominate over residues 278 to 287 (QYDEDRSPSQ).

Belongs to the splicing factor SR family. SCL subfamily. In terms of assembly, component of the spliceosome. Homodimer. Interacts with AFC2, CYP59, RS2Z33, RNU1 and SR45. The interaction with AFC2 depends on phosphorylation status. Phosphorylated by AFC2. As to expression, ubiquitous. Mostly expressed in roots, fruits and flowers, and, to a lower extent, in leaves.

The protein resides in the nucleus speckle. It is found in the nucleus. It localises to the nucleoplasm. The protein localises to the cytoplasm. Involved in intron recognition and spliceosome assembly. Binds to multiple 5'-GAAG-3' repeats found in its third intron, suggesting autoregulation of alternative splicing. May be necessary for accurate splicing of the 3' region of introns. The chain is Serine/arginine-rich SC35-like splicing factor SCL33 (SCL33) from Arabidopsis thaliana (Mouse-ear cress).